Reading from the N-terminus, the 5005-residue chain is Bridge-like lipid transfer protein family member 1 (5005 aa).

Residues 27–47 (VVWLLVATILSCGWIIYLTYY) traverse the membrane as a helical segment. 2 disordered regions span residues 692–718 (RPAQKTSERVVSSPSMSPRPPVDPSEL) and 1205–1314 (KSVG…ASVC). The span at 708–718 (SPRPPVDPSEL) shows a compositional bias: pro residues. A compositionally biased stretch (basic and acidic residues) spans 1205–1215 (KSVGIEGERKT). Over residues 1226–1240 (SHSSSSSSEENSSSS) the composition is skewed to low complexity. Residues 1248–1275 (GEKESPSSAADDHSVQKDLLHSARRDDG) show a composition bias toward basic and acidic residues. Residues 1278 to 1303 (SVPTEISGTSPVSPNTQDKSVGQSPL) are compositionally biased toward polar residues. Residues Ser1301, Ser1305, and Ser1323 each carry the phosphoserine modification. At Thr1325 the chain carries Phosphothreonine. Disordered regions lie at residues 1343-1376 (SDVSRSDENVLDSPKQRRSFGSFPYTPSADSNSF), 1399-1425 (EEFEPISSDEGPGTYPGRKKKKKQMQQ), 1521-1544 (TNKRTSKSSLHRPLDLDTPTSEES), and 1676-1698 (FSENLSPKQDIRGTKTEHPMIGT). A phosphoserine mark is found at Ser1355 and Ser1406. The span at 1521-1530 (TNKRTSKSSL) shows a compositional bias: basic residues. Residues 1684–1693 (QDIRGTKTEH) are compositionally biased toward basic and acidic residues. Residues Ser1805 and Ser1808 each carry the phosphoserine modification. 6 disordered regions span residues 1927–1991 (RGGV…PLMP), 2165–2192 (PAQPLKPPATVDQEHEEGLGLDNGGGLQ), 2265–2288 (TSGDTATDSPVHVGRAGMPVKESP), 2367–2387 (ESPVTKSGHNSLPTGVAPNLP), 2400–2420 (SSDQNTLDGTHSQHSTSQDDV), and 2598–2677 (TAGS…KDVV). Composition is skewed to polar residues over residues 1931–1948 (LTSNNSSDSPTGSGYNTD) and 1959–1971 (TSPSSDINGNSVS). Composition is skewed to polar residues over residues 2367 to 2379 (ESPVTKSGHNSLP), 2400 to 2418 (SSDQNTLDGTHSQHSTSQD), and 2598 to 2608 (TAGSASPTPTF). A phosphoserine mark is found at Ser2601 and Ser2603. Over residues 2619 to 2638 (SDFSRSSRGSLNGGNRVNNA) the composition is skewed to low complexity. Over residues 2643 to 2665 (ANNENNKKESRNKNSLGRSERRT) the composition is skewed to basic and acidic residues. Ser2755 is modified (phosphoserine). The interval 2928-2967 (RQPSTAPQPMKEDIATPLPSEKTPTSVNQTPIETNEFPQL) is disordered. Positions 2949-2964 (KTPTSVNQTPIETNEF) are enriched in polar residues. Phosphoserine occurs at positions 3562, 3577, and 3653. Disordered regions lie at residues 3614–3662 (YSRS…TFNI), 3686–3744 (SSNS…ERFY), 3821–3843 (RRSYDRSSRSLDQDSPSKKKKFQ), 3935–3954 (KTNTLLPPQPPPIPSAKGKG), 4089–4145 (TTYP…SSSS), and 4325–4396 (QSAS…ASQQ). Positions 3686–3711 (SSNSEGSCSVFSSPKTTGGFSPSVPF) are enriched in polar residues. The segment covering 3727–3736 (EDSEKDEKDE) has biased composition (acidic residues). Positions 3821 to 3837 (RRSYDRSSRSLDQDSPS) are enriched in basic and acidic residues. Residues 4097–4112 (SPGSNAPQTGAKTSAS) show a composition bias toward polar residues. Positions 4117–4145 (PGSSGLGSPLGRSRHSSSQSDLTGSSSSS) are enriched in low complexity. Position 4124 is a phosphoserine (Ser4124). Residues 4325 to 4358 (QSASFTHMPQSPNVFNEHMTNNTMSPGTAAQSLK) show a composition bias toward polar residues. The span at 4359–4372 (SPASIRSRSVSDSS) shows a compositional bias: low complexity. A compositionally biased stretch (polar residues) spans 4381 to 4396 (KTSTPVNKSNKAASQQ).

In terms of tissue distribution, highly expressed in testis and ovary. Weakly or not expressed in other tissues.

Its subcellular location is the cell membrane. It is found in the endoplasmic reticulum membrane. The protein resides in the mitochondrion membrane. Its function is as follows. Tube-forming lipid transport protein which provides phosphatidylethanolamine for glycosylphosphatidylinositol (GPI) anchor synthesis in the endoplasmic reticulum. Plays a role in endosomal trafficking and endosome recycling. Also involved in the actin cytoskeleton and cilia structural dynamics. Acts as a regulator of phagocytosis. The chain is Bridge-like lipid transfer protein family member 1 (Bltp1) from Mus musculus (Mouse).